The following is a 368-amino-acid chain: 4-hydroxy-3-methylbut-2-en-1-yl diphosphate synthase (flavodoxin) (368 aa).

Positions 268, 271, 303, and 310 each coordinate [4Fe-4S] cluster.

This sequence belongs to the IspG family. The cofactor is [4Fe-4S] cluster.

It catalyses the reaction (2E)-4-hydroxy-3-methylbut-2-enyl diphosphate + oxidized [flavodoxin] + H2O + 2 H(+) = 2-C-methyl-D-erythritol 2,4-cyclic diphosphate + reduced [flavodoxin]. It participates in isoprenoid biosynthesis; isopentenyl diphosphate biosynthesis via DXP pathway; isopentenyl diphosphate from 1-deoxy-D-xylulose 5-phosphate: step 5/6. Functionally, converts 2C-methyl-D-erythritol 2,4-cyclodiphosphate (ME-2,4cPP) into 1-hydroxy-2-methyl-2-(E)-butenyl 4-diphosphate. This Bacillus cytotoxicus (strain DSM 22905 / CIP 110041 / 391-98 / NVH 391-98) protein is 4-hydroxy-3-methylbut-2-en-1-yl diphosphate synthase (flavodoxin).